A 342-amino-acid chain; its full sequence is Anthranilate phosphoribosyltransferase (342 aa).

5-phospho-alpha-D-ribose 1-diphosphate-binding positions include Gly83, 86–87 (GD), Thr91, 93–96 (NIST), 111–119 (KHGGRSVSS), and Ser123. Gly83 contacts anthranilate. Ser95 serves as a coordination point for Mg(2+). Arg169 is a binding site for anthranilate. 2 residues coordinate Mg(2+): Asp228 and Glu229.

Belongs to the anthranilate phosphoribosyltransferase family. Homodimer. The cofactor is Mg(2+).

It catalyses the reaction N-(5-phospho-beta-D-ribosyl)anthranilate + diphosphate = 5-phospho-alpha-D-ribose 1-diphosphate + anthranilate. It functions in the pathway amino-acid biosynthesis; L-tryptophan biosynthesis; L-tryptophan from chorismate: step 2/5. In terms of biological role, catalyzes the transfer of the phosphoribosyl group of 5-phosphorylribose-1-pyrophosphate (PRPP) to anthranilate to yield N-(5'-phosphoribosyl)-anthranilate (PRA). The polypeptide is Anthranilate phosphoribosyltransferase (Chromobacterium violaceum (strain ATCC 12472 / DSM 30191 / JCM 1249 / CCUG 213 / NBRC 12614 / NCIMB 9131 / NCTC 9757 / MK)).